Consider the following 195-residue polypeptide: Probable GTP-binding protein EngB (195 aa).

Residues 22–195 (GLPEIALAGR…WNAILAKINK (174 aa)) enclose the EngB-type G domain. GTP is bound by residues 30–37 (GRSNVGKS), 57–61 (GKTQT), 75–78 (DVPG), 142–145 (TKAD), and 174–176 (FSS). Ser37 and Thr59 together coordinate Mg(2+).

It belongs to the TRAFAC class TrmE-Era-EngA-EngB-Septin-like GTPase superfamily. EngB GTPase family. Mg(2+) is required as a cofactor.

Its function is as follows. Necessary for normal cell division and for the maintenance of normal septation. This chain is Probable GTP-binding protein EngB, found in Bacillus pumilus (strain SAFR-032).